We begin with the raw amino-acid sequence, 423 residues long: AP-1 complex subunit mu-2 (423 aa).

One can recognise an MHD domain in the interval 168–421 (KNEVFIDVIE…ITQSGDYQLR (254 aa)).

The protein belongs to the adaptor complexes medium subunit family. As to quaternary structure, adaptor protein complex 1 (AP-1) is a heterotetramer composed of two large adaptins (gamma-type subunit AP1G1 and beta-type subunit AP1B1), a medium adaptin (mu-type subunit AP1M1 or AP1M2) and a small adaptin (sigma-type subunit AP1S1 or AP1S2 or AP1S3). Interacts with P2X4. Phosphorylation of membrane-bound AP1M1/AP1M2 increases its affinity for sorting signals.

Its subcellular location is the golgi apparatus. It localises to the cytoplasmic vesicle. The protein localises to the clathrin-coated vesicle membrane. Its function is as follows. Subunit of clathrin-associated adaptor protein complex 1 that plays a role in protein sorting in the trans-Golgi network (TGN) and endosomes. The AP complexes mediate the recruitment of clathrin to membranes and the recognition of sorting signals within the cytosolic tails of transmembrane cargo molecules. The protein is AP-1 complex subunit mu-2 (AP1M2) of Homo sapiens (Human).